A 150-amino-acid polypeptide reads, in one-letter code: UPF0756 membrane protein YPN_1328 (150 aa).

A run of 4 helical transmembrane segments spans residues 16-36, 51-71, 88-108, and 114-134; these read ALGI…LIAI, YGLT…IASG, ILAI…VSLM, and VVAG…GVPV.

It belongs to the UPF0756 family.

Its subcellular location is the cell membrane. The polypeptide is UPF0756 membrane protein YPN_1328 (Yersinia pestis bv. Antiqua (strain Nepal516)).